The following is a 585-amino-acid chain: Arginine--tRNA ligase (585 aa).

The short motif at 131–141 is the 'HIGH' region element; sequence ANPTGPMHVGH.

Belongs to the class-I aminoacyl-tRNA synthetase family. As to quaternary structure, monomer.

The protein localises to the cytoplasm. The catalysed reaction is tRNA(Arg) + L-arginine + ATP = L-arginyl-tRNA(Arg) + AMP + diphosphate. This Brucella anthropi (strain ATCC 49188 / DSM 6882 / CCUG 24695 / JCM 21032 / LMG 3331 / NBRC 15819 / NCTC 12168 / Alc 37) (Ochrobactrum anthropi) protein is Arginine--tRNA ligase.